A 934-amino-acid chain; its full sequence is Protein translocase subunit SecA (934 aa).

Residues Gln87, 105-109 (GEGKT), and Asp515 each bind ATP. Cys918, Cys920, Cys929, and His930 together coordinate Zn(2+).

Belongs to the SecA family. As to quaternary structure, monomer and homodimer. Part of the essential Sec protein translocation apparatus which comprises SecA, SecYEG and auxiliary proteins SecDF-YajC and YidC. The cofactor is Zn(2+).

It localises to the cell inner membrane. It is found in the cytoplasm. The enzyme catalyses ATP + H2O + cellular proteinSide 1 = ADP + phosphate + cellular proteinSide 2.. Part of the Sec protein translocase complex. Interacts with the SecYEG preprotein conducting channel. Has a central role in coupling the hydrolysis of ATP to the transfer of proteins into and across the cell membrane, serving both as a receptor for the preprotein-SecB complex and as an ATP-driven molecular motor driving the stepwise translocation of polypeptide chains across the membrane. The protein is Protein translocase subunit SecA of Ralstonia pickettii (strain 12J).